A 202-amino-acid polypeptide reads, in one-letter code: Imidazoleglycerol-phosphate dehydratase (202 aa).

The protein belongs to the imidazoleglycerol-phosphate dehydratase family.

The protein localises to the cytoplasm. It carries out the reaction D-erythro-1-(imidazol-4-yl)glycerol 3-phosphate = 3-(imidazol-4-yl)-2-oxopropyl phosphate + H2O. Its pathway is amino-acid biosynthesis; L-histidine biosynthesis; L-histidine from 5-phospho-alpha-D-ribose 1-diphosphate: step 6/9. This chain is Imidazoleglycerol-phosphate dehydratase, found in Rhizobium johnstonii (strain DSM 114642 / LMG 32736 / 3841) (Rhizobium leguminosarum bv. viciae).